The chain runs to 407 residues: M protein, serotype 2.1 (407 aa).

An N-terminal signal peptide occupies residues 1–41; the sequence is MARKDTNKQYSLRKLKTGTASVAVAVAVLGAGFANQTTVKA. Residues 81–94 form a 2 X 7 AA tandem repeats region; the sequence is VEEEHKKVEEEHKK. Basic and acidic residues-rich tracts occupy residues 83–144, 152–229, 237–264, and 272–288; these read EEHK…KRYQ, QLEK…EKQI, LSRD…EKQI, and LSRD…KVEA. The tract at residues 83 to 289 is disordered; it reads EEHKKVEEEH…REAKKKVEAD (207 aa). 4 C repeats span residues 151–185, 186–220, 221–255, and 256–290; these read QQLE…EAEH, QKLK…EAEH, and QKLK…EADL. 4 D repeats span residues 323-328, 329-334, 337-342, and 344-349; these read AKLEAE, AKALKE, AKQAEE, and AKLKGN. The segment at 344–382 is disordered; sequence AKLKGNQTPNAKVAPQANRSRSAMTQQKRTLPSTGETAN. Residues 360–380 are compositionally biased toward polar residues; the sequence is ANRSRSAMTQQKRTLPSTGET. The LPXTG sorting signal motif lies at 374-378; the sequence is LPSTG. Residue threonine 377 is modified to Pentaglycyl murein peptidoglycan amidated threonine. The propeptide at 378–407 is removed by sortase; it reads GETANPFFTAAAATVMVSAGMLALKRKEEN.

The protein belongs to the M protein family.

It localises to the secreted. Its subcellular location is the cell wall. Functionally, this protein is one of the different antigenic serotypes of protein M. Protein M is closely associated with virulence of the bacterium and can render the organism resistant to phagocytosis. The polypeptide is M protein, serotype 2.1 (emmL2.1) (Streptococcus pyogenes).